Here is a 1385-residue protein sequence, read N- to C-terminus: Contactin-associated protein 1 (1385 aa).

Residues 1–20 form the signal peptide; sequence MMSLRLFSILLATVVSGAWG. The Extracellular segment spans residues 21–1284; that stretch reads WGYYGCNEEL…PYYHDDGWIA (1264 aa). The region spanning 26-169 is the F5/8 type C domain; the sequence is CNEELVGPLY…IGLRLGIYGC (144 aa). Cysteine 26 and cysteine 169 are oxidised to a cystine. N-linked (GlcNAc...) asparagine glycosylation is found at asparagine 121, asparagine 129, and asparagine 277. 2 Laminin G-like domains span residues 204–356 and 390–539; these read FKTE…AFRC and FRTW…FDTC. Cysteine 324 and cysteine 356 are joined by a disulfide. N-linked (GlcNAc...) asparagine glycosylation is found at asparagine 421, asparagine 500, and asparagine 519. 4 disulfide bridges follow: cysteine 507-cysteine 539, cysteine 545-cysteine 556, cysteine 550-cysteine 565, and cysteine 567-cysteine 577. The region spanning 545–577 is the EGF-like 1 domain; sequence CSPNMCEHDGRCYQSWDDFICYCELTGYKGVTC. One can recognise a Fibrinogen C-terminal domain in the interval 577-796; it reads CHEPLYKESC…NTISFHTGAA (220 aa). N-linked (GlcNAc...) asparagine glycosylation is found at asparagine 598, asparagine 654, asparagine 665, asparagine 764, asparagine 805, asparagine 844, asparagine 861, asparagine 949, and asparagine 957. Residues 814 to 958 enclose the Laminin G-like 3 domain; that stretch reads FRTSAPSGVF…NASEGTFPNC (145 aa). 4 disulfide bridges follow: cysteine 931-cysteine 958, cysteine 962-cysteine 975, cysteine 969-cysteine 984, and cysteine 986-cysteine 996. Residues 962 to 996 enclose the EGF-like 2 domain; the sequence is CTHPRFPCFHGGRCVERYSYYTCDCDLTAFDGPYC. Asparagine 1079 and asparagine 1148 each carry an N-linked (GlcNAc...) asparagine glycan. The region spanning 1089–1251 is the Laminin G-like 4 domain; it reads FSTNSAPAVL…VQGELSESNC (163 aa). Cysteine 1210 and cysteine 1251 form a disulfide bridge. The helical transmembrane segment at 1285-1305 threads the bilayer; it reads ILLGFLVAFLLLGLVGMLVLF. Residues 1306–1385 are Cytoplasmic-facing; the sequence is YLQNHRYKGS…PQILEESRSE (80 aa). Residues 1317-1385 are disordered; sequence HTNEPKATHD…PQILEESRSE (69 aa). The segment covering 1319-1329 has biased composition (basic and acidic residues); the sequence is NEPKATHDSHP. Over residues 1334-1367 the composition is skewed to pro residues; the sequence is PLPPSGPAQAPAPTPAPTQLPTPAPAPAPAPASG. Residues 1334-1370 carry the SH3-binding motif; the sequence is PLPPSGPAQAPAPTPAPTQLPTPAPAPAPAPASGPGP. Serine 1384 is subject to Phosphoserine.

It belongs to the neurexin family. As to quaternary structure, interacts with CNTN1/contactin in cis form. Expressed in brain. In myelinated nerve fibers predominantly found in paranodal axoglial junctions. In the internodal region of myelinated axons in the CNS and the PNS also found as a thin line apposing the inner mesaxon of the myelin sheath. In PNS neurons this line forms a circumferential ring that apposes the innermost aspect of Schmidt-Lanterman incisures.

It is found in the membrane. The protein resides in the cell junction. It localises to the paranodal septate junction. Required, with CNTNAP2, for radial and longitudinal organization of myelinated axons. Plays a role in the formation of functional distinct domains critical for saltatory conduction of nerve impulses in myelinated nerve fibers. Demarcates the paranodal region of the axo-glial junction. In association with contactin involved in the signaling between axons and myelinating glial cells. This chain is Contactin-associated protein 1 (Cntnap1), found in Mus musculus (Mouse).